A 335-amino-acid polypeptide reads, in one-letter code: tRNA-dihydrouridine(20/20a) synthase (335 aa).

FMN contacts are provided by residues 19–21 and glutamine 72; that span reads PMM. Cysteine 102 functions as the Proton donor in the catalytic mechanism. FMN-binding positions include lysine 141, histidine 173, 213–215, and 235–236; these read NGG and GR.

This sequence belongs to the Dus family. DusA subfamily. Requires FMN as cofactor.

It catalyses the reaction 5,6-dihydrouridine(20) in tRNA + NADP(+) = uridine(20) in tRNA + NADPH + H(+). The enzyme catalyses 5,6-dihydrouridine(20) in tRNA + NAD(+) = uridine(20) in tRNA + NADH + H(+). It carries out the reaction 5,6-dihydrouridine(20a) in tRNA + NADP(+) = uridine(20a) in tRNA + NADPH + H(+). The catalysed reaction is 5,6-dihydrouridine(20a) in tRNA + NAD(+) = uridine(20a) in tRNA + NADH + H(+). Functionally, catalyzes the synthesis of 5,6-dihydrouridine (D), a modified base found in the D-loop of most tRNAs, via the reduction of the C5-C6 double bond in target uridines. Specifically modifies U20 and U20a in tRNAs. The protein is tRNA-dihydrouridine(20/20a) synthase of Xanthomonas campestris pv. campestris (strain ATCC 33913 / DSM 3586 / NCPPB 528 / LMG 568 / P 25).